The primary structure comprises 247 residues: ATP synthase subunit a (247 aa).

6 consecutive transmembrane segments (helical) span residues 24–44 (IAFTTSSAYMLLAVVLIAAMM), 82–102 (FFPLVFSLFMFIFVSNIVGII), 112–132 (IIVTFSLALLVFLTVIIYGFY), 141–161 (LFVPSGIPAVILPLVVIIEII), 181–201 (GHVTLKVFASFVTMLGALGFV), and 206–226 (ALLPLGLTVALTGLELMVAFL).

It belongs to the ATPase A chain family. F-type ATPases have 2 components, CF(1) - the catalytic core - and CF(0) - the membrane proton channel. CF(1) has five subunits: alpha(3), beta(3), gamma(1), delta(1), epsilon(1). CF(0) has four main subunits: a, b, b' and c.

It is found in the cell inner membrane. Functionally, key component of the proton channel; it plays a direct role in the translocation of protons across the membrane. The sequence is that of ATP synthase subunit a from Bradyrhizobium sp. (strain ORS 278).